We begin with the raw amino-acid sequence, 441 residues long: 3-phosphoshikimate 1-carboxyvinyltransferase (441 aa).

Residues lysine 25, serine 26, and arginine 30 each coordinate 3-phosphoshikimate. A phosphoenolpyruvate-binding site is contributed by lysine 25. Positions 97 and 125 each coordinate phosphoenolpyruvate. Positions 169, 170, 311, and 338 each coordinate 3-phosphoshikimate. Residue glutamine 170 participates in phosphoenolpyruvate binding. Aspartate 311 functions as the Proton acceptor in the catalytic mechanism. Phosphoenolpyruvate contacts are provided by arginine 342, arginine 383, and lysine 410.

The protein belongs to the EPSP synthase family. Monomer.

Its subcellular location is the cytoplasm. The catalysed reaction is 3-phosphoshikimate + phosphoenolpyruvate = 5-O-(1-carboxyvinyl)-3-phosphoshikimate + phosphate. It functions in the pathway metabolic intermediate biosynthesis; chorismate biosynthesis; chorismate from D-erythrose 4-phosphate and phosphoenolpyruvate: step 6/7. Catalyzes the transfer of the enolpyruvyl moiety of phosphoenolpyruvate (PEP) to the 5-hydroxyl of shikimate-3-phosphate (S3P) to produce enolpyruvyl shikimate-3-phosphate and inorganic phosphate. The sequence is that of 3-phosphoshikimate 1-carboxyvinyltransferase from Chlamydia muridarum (strain MoPn / Nigg).